Consider the following 775-residue polypeptide: Beta-galactosidase 7 (775 aa).

The N-terminal stretch at 1–17 (MRGGMAITAALVVVAAA) is a signal peptide. Glu185 serves as the catalytic Proton donor. Catalysis depends on Glu256, which acts as the Nucleophile. Asn257, Asn266, Asn277, Asn358, and Asn602 each carry an N-linked (GlcNAc...) asparagine glycan. The region spanning 689–775 (RGKVPKVRIW…KSLLVVADCR (87 aa)) is the SUEL-type lectin domain.

It belongs to the glycosyl hydrolase 35 family.

The protein resides in the secreted. It is found in the extracellular space. The protein localises to the apoplast. The enzyme catalyses Hydrolysis of terminal non-reducing beta-D-galactose residues in beta-D-galactosides.. This is Beta-galactosidase 7 from Oryza sativa subsp. japonica (Rice).